The primary structure comprises 408 residues: 3-ketoacyl-CoA thiolase B, peroxisomal (408 aa).

Cysteine 112 serves as the catalytic Acyl-thioester intermediate. Residues histidine 366 and cysteine 394 each act as proton acceptor in the active site.

It belongs to the thiolase-like superfamily. Thiolase family. Homodimer.

The protein resides in the peroxisome. The catalysed reaction is an acyl-CoA + acetyl-CoA = a 3-oxoacyl-CoA + CoA. It participates in lipid metabolism; fatty acid metabolism. This chain is 3-ketoacyl-CoA thiolase B, peroxisomal, found in Candida tropicalis (Yeast).